Consider the following 209-residue polypeptide: Guanylyl cyclase-activating protein 3 (209 aa).

A lipid anchor (N-myristoyl glycine) is attached at Gly2. The residue at position 3 (Asn3) is a Deamidated asparagine. 4 consecutive EF-hand domains span residues 15 to 50, 52 to 87, 88 to 123, and 130 to 165; these read PTQE…QGLN, KANK…IMQE, KMEQ…VQAL, and SPEE…DQDL. Ca(2+) is bound by residues Asp65, Asn67, Asp69, Glu76, Asp101, Asp103, Asn105, Ser107, Glu112, Asp143, Asn145, Asp147, Glu149, and Glu154. Residues 187–209 are disordered; it reads QPDMETDSSKSPDKAGLGKVKMK.

As to expression, retina.

Stimulates guanylyl cyclase 1 (GC1) and GC2 when free calcium ions concentration is low and inhibits guanylyl cyclases when free calcium ions concentration is elevated. This Ca(2+)-sensitive regulation of guanylyl cyclase (GC) is a key event in recovery of the dark state of rod photoreceptors following light exposure. The polypeptide is Guanylyl cyclase-activating protein 3 (GUCA1C) (Homo sapiens (Human)).